The primary structure comprises 425 residues: Putative TRAP transporter large permease protein HI_1029 (425 aa).

The next 13 membrane-spanning stretches (helical) occupy residues 3-23 (VIIF…VAFA), 24-44 (LLIC…QILA), 54-74 (FSLM…EGGL), 93-113 (LGFV…SAVA), 139-159 (LIGT…FIVF), 169-189 (KLFL…AILW), 217-237 (VWAL…IFTP), 241-261 (GVVA…ELPL), 275-295 (TAVV…ITVA), 312-332 (PTIL…VMDL), 334-354 (PTVL…GIDP), 355-375 (VYFG…PPVG), and 399-419 (YLGM…LILM).

This sequence belongs to the TRAP transporter large permease family.

Its subcellular location is the cell inner membrane. This is Putative TRAP transporter large permease protein HI_1029 from Haemophilus influenzae (strain ATCC 51907 / DSM 11121 / KW20 / Rd).